We begin with the raw amino-acid sequence, 222 residues long: Putative auxin response factor 23 (222 aa).

The segment at residues 126–222 (FTKVLTASDT…ETGELRVGIR (97 aa)) is a DNA-binding region (TF-B3).

Belongs to the ARF family. In terms of assembly, homo and heterodimers.

The protein localises to the nucleus. Functionally, auxin response factors (ARFs) are transcriptional factors that binds specifically to the DNA sequence 5'-TGTCTC-3' found in the auxin-responsive promoter elements (AuxREs). Could act as transcriptional activator or repressor. Formation of heterodimers with Aux/IAA proteins may alter their ability to modulate early auxin response genes expression. The sequence is that of Putative auxin response factor 23 (ARF23) from Arabidopsis thaliana (Mouse-ear cress).